A 375-amino-acid polypeptide reads, in one-letter code: Alcohol dehydrogenase class-3 chain L (375 aa).

At alanine 1 the chain carries N-acetylalanine. Zn(2+) contacts are provided by cysteine 46, histidine 68, cysteine 98, cysteine 101, cysteine 104, cysteine 112, and cysteine 175.

This sequence belongs to the zinc-containing alcohol dehydrogenase family. Class-III subfamily. As to quaternary structure, homodimer or heterodimer with H chain. The cofactor is Zn(2+).

It is found in the cytoplasm. The enzyme catalyses a primary alcohol + NAD(+) = an aldehyde + NADH + H(+). The catalysed reaction is a secondary alcohol + NAD(+) = a ketone + NADH + H(+). It carries out the reaction S-(hydroxymethyl)glutathione + NADP(+) = S-formylglutathione + NADPH + H(+). It catalyses the reaction S-(hydroxymethyl)glutathione + NAD(+) = S-formylglutathione + NADH + H(+). Class-III ADH is remarkably ineffective in oxidizing ethanol, but it readily catalyzes the oxidation of long-chain primary alcohols and the oxidation of S-(hydroxymethyl) glutathione. This chain is Alcohol dehydrogenase class-3 chain L, found in Gadus morhua (Atlantic cod).